The primary structure comprises 186 residues: dCTP deaminase (186 aa).

Position 107–112 (107–112 (KSTYAR)) interacts with dCTP. E133 functions as the Proton donor/acceptor in the catalytic mechanism. Q152, Y166, and Q176 together coordinate dCTP.

The protein belongs to the dCTP deaminase family. In terms of assembly, homotrimer.

It carries out the reaction dCTP + H2O + H(+) = dUTP + NH4(+). Its pathway is pyrimidine metabolism; dUMP biosynthesis; dUMP from dCTP (dUTP route): step 1/2. In terms of biological role, catalyzes the deamination of dCTP to dUTP. The polypeptide is dCTP deaminase (Campylobacter jejuni subsp. jejuni serotype O:6 (strain 81116 / NCTC 11828)).